Reading from the N-terminus, the 113-residue chain is Flagellar hook-basal body complex protein FliE (113 aa).

It belongs to the FliE family.

It localises to the bacterial flagellum basal body. The polypeptide is Flagellar hook-basal body complex protein FliE (Rhizobium etli (strain CIAT 652)).